The primary structure comprises 2375 residues: Talin-2 (2375 aa).

In terms of domain architecture, FERM spans 88 to 406; the sequence is RPQKIRMLDG…GYIDIILKKK (319 aa). The interaction with PIP5K1C stretch occupies residues 312 to 406; the sequence is GVSFFLVKEK…GYIDIILKKK (95 aa). A phosphoserine mark is found at serine 428, serine 450, serine 624, and serine 1024. Phosphotyrosine is present on tyrosine 1666. The I/LWEQ domain maps to 2205 to 2375; that stretch reads TEWVDPEDPT…KRLQAAGNAV (171 aa).

In terms of assembly, interacts directly with PIP5K1C.

Its subcellular location is the cytoplasm. The protein resides in the cell junction. It localises to the focal adhesion. It is found in the synapse. The protein localises to the cell membrane. Its subcellular location is the cytoskeleton. Its function is as follows. As a major component of focal adhesion plaques that links integrin to the actin cytoskeleton, may play an important role in cell adhesion. Recruits PIP5K1C to focal adhesion plaques and strongly activates its kinase activity. The sequence is that of Talin-2 (Tln2) from Mus musculus (Mouse).